The primary structure comprises 197 residues: Segregation and condensation protein B (197 aa).

The protein belongs to the ScpB family. Homodimer. Homodimerization may be required to stabilize the binding of ScpA to the Smc head domains. Component of a cohesin-like complex composed of ScpA, ScpB and the Smc homodimer, in which ScpA and ScpB bind to the head domain of Smc. The presence of the three proteins is required for the association of the complex with DNA.

Its subcellular location is the cytoplasm. Its function is as follows. Participates in chromosomal partition during cell division. May act via the formation of a condensin-like complex containing Smc and ScpA that pull DNA away from mid-cell into both cell halves. This Bacillus licheniformis (strain ATCC 14580 / DSM 13 / JCM 2505 / CCUG 7422 / NBRC 12200 / NCIMB 9375 / NCTC 10341 / NRRL NRS-1264 / Gibson 46) protein is Segregation and condensation protein B.